Here is a 562-residue protein sequence, read N- to C-terminus: Probable sesquiterpene synthase (562 aa).

Mg(2+)-binding residues include D315, D319, and E467. Positions 315–319 match the DDXXD motif motif; sequence DDIYD.

The protein belongs to the terpene synthase family. Tpsa subfamily. Mg(2+) is required as a cofactor. Mn(2+) serves as cofactor.

In terms of biological role, sesquiterpene synthase. This Santalum spicatum (Australian sandalwood) protein is Probable sesquiterpene synthase (SesquiTPS).